A 430-amino-acid polypeptide reads, in one-letter code: Aspartate aminotransferase, mitochondrial (430 aa).

The N-terminal 29 residues, 1–29, are a transit peptide targeting the mitochondrion; the sequence is MALLHSSRILSGMAAAFHPGLAAAASARA. Threonine 48 is modified (phosphothreonine). Lysine 59 carries the post-translational modification N6-acetyllysine. Position 65 (glycine 65) interacts with substrate. Lysine 73 is subject to N6-acetyllysine; alternate. N6-succinyllysine; alternate is present on lysine 73. Lysine 82 bears the N6-acetyllysine mark. Lysine 90 bears the N6-acetyllysine; alternate mark. Lysine 90 carries the N6-succinyllysine; alternate modification. Residue tyrosine 96 is modified to 3'-nitrotyrosine; alternate. Position 96 is a phosphotyrosine; alternate (tyrosine 96). N6-acetyllysine; alternate is present on residues lysine 107 and lysine 122. Lysine 107 and lysine 122 each carry N6-succinyllysine; alternate. Serine 143 is modified (phosphoserine). Residue lysine 159 is modified to N6-acetyllysine; alternate. Lysine 159 carries the N6-succinyllysine; alternate modification. Position 162 (tryptophan 162) interacts with substrate. Lysine 185 bears the N6-acetyllysine; alternate mark. Lysine 185 carries the post-translational modification N6-succinyllysine; alternate. A substrate-binding site is contributed by asparagine 215. Lysine 227 carries the post-translational modification N6-succinyllysine. At lysine 234 the chain carries N6-acetyllysine. N6-acetyllysine; alternate occurs at positions 279 and 296. An N6-(pyridoxal phosphate)lysine; alternate modification is found at lysine 279. N6-succinyllysine; alternate is present on lysine 296. Residue lysine 302 is modified to N6-acetyllysine. Residue lysine 309 is modified to N6-acetyllysine; alternate. An N6-succinyllysine; alternate modification is found at lysine 309. At arginine 313 the chain carries Asymmetric dimethylarginine. An N6-acetyllysine; alternate modification is found at lysine 338. An N6-succinyllysine; alternate modification is found at lysine 338. Lysine 345 carries the post-translational modification N6-acetyllysine. Position 363 is an N6-acetyllysine; alternate (lysine 363). Lysine 363 carries the N6-succinyllysine; alternate modification. Lysine 364 and lysine 387 each carry N6-acetyllysine. N6-acetyllysine; alternate occurs at positions 396 and 404. N6-succinyllysine; alternate occurs at positions 396 and 404. Residue arginine 407 participates in substrate binding.

Belongs to the class-I pyridoxal-phosphate-dependent aminotransferase family. In terms of assembly, homodimer. It depends on pyridoxal 5'-phosphate as a cofactor. In terms of processing, acetylation of Lys-296, Lys-345 and Lys-363 is observed in liver mitochondria from fasted mice but not from fed mice. Detected in brain (at protein level).

The protein localises to the mitochondrion matrix. It is found in the cell membrane. The enzyme catalyses L-aspartate + 2-oxoglutarate = oxaloacetate + L-glutamate. The catalysed reaction is L-kynurenine + 2-oxoglutarate = kynurenate + L-glutamate + H2O. Its function is as follows. Catalyzes the irreversible transamination of the L-tryptophan metabolite L-kynurenine to form kynurenic acid (KA). As a member of the malate-aspartate shuttle, it has a key role in the intracellular NAD(H) redox balance. Is important for metabolite exchange between mitochondria and cytosol, and for amino acid metabolism. Facilitates cellular uptake of long-chain free fatty acids. The protein is Aspartate aminotransferase, mitochondrial (Got2) of Mus musculus (Mouse).